A 622-amino-acid polypeptide reads, in one-letter code: Vacuolar protein sorting-associated protein 27 (622 aa).

The 132-residue stretch at 18 to 149 (SESIPNGDLD…KLISRGIKFP (132 aa)) folds into the VHS domain. Serine 157 carries the phosphoserine modification. The FYVE-type; atypical zinc-finger motif lies at 170-230 (WIDSDACMIC…VCDSCFEDYD (61 aa)). Cysteine 176, cysteine 179, cysteine 192, cysteine 195, cysteine 200, histidine 203, cysteine 222, and cysteine 225 together coordinate Zn(2+). The interval 236-260 (DSKKSKKHRHKRKKDRDYSTPEDEE) is disordered. Over residues 239–249 (KSKKHRHKRKK) the composition is skewed to basic residues. One can recognise a UIM 1 domain in the interval 258–277 (DEEELIRKAIELSLKESRNS). Lysine 294 is covalently cross-linked (Glycyl lysine isopeptide (Lys-Gly) (interchain with G-Cter in ubiquitin)). The UIM 2 domain maps to 301-320 (EEDPDLKAAIQESLREAEEA). Over residues 317–328 (AEEAKLRSERQK) the composition is skewed to basic and acidic residues. Disordered stretches follow at residues 317 to 348 (AEEA…IHSV) and 462 to 622 (AESY…LIEL). Residues 462-500 (AESYQTPPLQQLSSHQYKPQQDVSRQQSVKANSSPTTNI) are compositionally biased toward polar residues. A Phosphoserine modification is found at serine 495. Over residues 533 to 548 (EAEDEGTQAVQDEESS) the composition is skewed to acidic residues. Serine 613 bears the Phosphoserine mark.

It belongs to the VPS27 family. Component of the ESCRT-0 complex composed of HSE1 and VPS27. Interacts with ENT3 and ENT5, the ESCRT-I subunits VPS23 and VPS28 and with the COPIb subunits SEC27, SEC28 and SEC33. May form a complex composed of VPS27, HSE1 and DOA1. Interacts with DOA1. Interacts with ubiquitin.

It is found in the endosome membrane. Its function is as follows. Component of the ESCRT-0 complex which is the sorting receptor for ubiquitinated cargo proteins at the multivesicular body (MVB) and recruits ESCRT-I to the MVB outer membrane. Controls exit from the prevacuolar compartment (PVC) in both the forward direction to the vacuole and the return to the Golgi. Allows VPS10 to return to the (trans-Golgi network) TGN from the PVC. Might also function as an alternate adapter in the COPIb clathrin-like coat. The chain is Vacuolar protein sorting-associated protein 27 (VPS27) from Saccharomyces cerevisiae (strain ATCC 204508 / S288c) (Baker's yeast).